A 138-amino-acid chain; its full sequence is MSQAEQNFMITYARRKSARASCYIKPGNGKVFVNDIPIEIIPIEVVRYKIMEPLVLAGDKITSSIEARIYTQGGGIMGQADAARMALARALVKFTNSKELVEIYKSYDRTMLAGDPRQTESEKWMRYSARRWRQKAYR.

The protein belongs to the universal ribosomal protein uS9 family.

The polypeptide is Small ribosomal subunit protein uS9 (rps9) (Sulfolobus acidocaldarius (strain ATCC 33909 / DSM 639 / JCM 8929 / NBRC 15157 / NCIMB 11770)).